Consider the following 202-residue polypeptide: Dephospho-CoA kinase (202 aa).

Residues 3–201 (AIGLTGGIGS…QRYLGFAAAA (199 aa)) enclose the DPCK domain. 11-16 (GSGKTT) serves as a coordination point for ATP.

This sequence belongs to the CoaE family.

The protein resides in the cytoplasm. It catalyses the reaction 3'-dephospho-CoA + ATP = ADP + CoA + H(+). It participates in cofactor biosynthesis; coenzyme A biosynthesis; CoA from (R)-pantothenate: step 5/5. In terms of biological role, catalyzes the phosphorylation of the 3'-hydroxyl group of dephosphocoenzyme A to form coenzyme A. This is Dephospho-CoA kinase from Burkholderia lata (strain ATCC 17760 / DSM 23089 / LMG 22485 / NCIMB 9086 / R18194 / 383).